The chain runs to 203 residues: LexA repressor (203 aa).

The H-T-H motif DNA-binding region spans isoleucine 28–lysine 47. Active-site for autocatalytic cleavage activity residues include serine 127 and lysine 164.

It belongs to the peptidase S24 family. Homodimer.

The enzyme catalyses Hydrolysis of Ala-|-Gly bond in repressor LexA.. Its function is as follows. Represses a number of genes involved in the response to DNA damage (SOS response), including recA and lexA. In the presence of single-stranded DNA, RecA interacts with LexA causing an autocatalytic cleavage which disrupts the DNA-binding part of LexA, leading to derepression of the SOS regulon and eventually DNA repair. The sequence is that of LexA repressor from Leptospira borgpetersenii serovar Hardjo-bovis (strain JB197).